We begin with the raw amino-acid sequence, 475 residues long: Beta-amyrin 16-alpha-hydroxylase CYP87D16 (475 aa).

A helical membrane pass occupies residues 3-23; it reads VVGLIGVAVVTILITQYVYKW. A heme-binding site is contributed by Cys-423.

The protein belongs to the cytochrome P450 family. The cofactor is heme.

It is found in the membrane. It carries out the reaction beta-amyrin + reduced [NADPH--hemoprotein reductase] + O2 = 16alpha-hydroxy-beta-amyrin + oxidized [NADPH--hemoprotein reductase] + H2O + H(+). Its function is as follows. Involved in the biosynthetic pathway of maesasaponins, which are oleanane-type saponins with diverse biological activities. Catalyzes the C-16alpha oxidation of beta-amyrin to form 16alpha-hydroxy-beta-amyrin. The sequence is that of Beta-amyrin 16-alpha-hydroxylase CYP87D16 from Maesa lanceolata (False assegai).